The following is a 582-amino-acid chain: 2-isopropylmalate synthase (582 aa).

The region spanning 40–314 (PRWCAVDLRD…DPMIDFSDID (275 aa)) is the Pyruvate carboxyltransferase domain. Mg(2+) contacts are provided by D49, H253, H255, and N289. Residues 456-582 (SPAGHPGGQW…NRAIRDNQVD (127 aa)) are regulatory domain.

This sequence belongs to the alpha-IPM synthase/homocitrate synthase family. LeuA type 2 subfamily. In terms of assembly, homodimer. It depends on Mg(2+) as a cofactor.

It is found in the cytoplasm. The enzyme catalyses 3-methyl-2-oxobutanoate + acetyl-CoA + H2O = (2S)-2-isopropylmalate + CoA + H(+). It participates in amino-acid biosynthesis; L-leucine biosynthesis; L-leucine from 3-methyl-2-oxobutanoate: step 1/4. Catalyzes the condensation of the acetyl group of acetyl-CoA with 3-methyl-2-oxobutanoate (2-ketoisovalerate) to form 3-carboxy-3-hydroxy-4-methylpentanoate (2-isopropylmalate). This is 2-isopropylmalate synthase from Renibacterium salmoninarum (strain ATCC 33209 / DSM 20767 / JCM 11484 / NBRC 15589 / NCIMB 2235).